Reading from the N-terminus, the 430-residue chain is Histidinol dehydrogenase (430 aa).

Tyr-130, Gln-191, and Asn-214 together coordinate NAD(+). Residues Ser-237, Gln-259, and His-262 each coordinate substrate. Residues Gln-259 and His-262 each coordinate Zn(2+). Residues Glu-327 and His-328 each act as proton acceptor in the active site. His-328, Asp-361, Glu-415, and His-420 together coordinate substrate. Zn(2+) is bound at residue Asp-361. A Zn(2+)-binding site is contributed by His-420.

The protein belongs to the histidinol dehydrogenase family. Zn(2+) is required as a cofactor.

The catalysed reaction is L-histidinol + 2 NAD(+) + H2O = L-histidine + 2 NADH + 3 H(+). It functions in the pathway amino-acid biosynthesis; L-histidine biosynthesis; L-histidine from 5-phospho-alpha-D-ribose 1-diphosphate: step 9/9. Catalyzes the sequential NAD-dependent oxidations of L-histidinol to L-histidinaldehyde and then to L-histidine. This chain is Histidinol dehydrogenase, found in Brucella melitensis biotype 1 (strain ATCC 23456 / CCUG 17765 / NCTC 10094 / 16M).